The following is a 356-amino-acid chain: Putative methylthioribose-1-phosphate isomerase (356 aa).

Substrate contacts are provided by residues 57–59 (RGA), R100, and Q206. D247 (proton donor) is an active-site residue. A substrate-binding site is contributed by 257 to 258 (NK).

The protein belongs to the eIF-2B alpha/beta/delta subunits family. MtnA subfamily.

The enzyme catalyses 5-(methylsulfanyl)-alpha-D-ribose 1-phosphate = 5-(methylsulfanyl)-D-ribulose 1-phosphate. In terms of biological role, catalyzes the interconversion of methylthioribose-1-phosphate (MTR-1-P) into methylthioribulose-1-phosphate (MTRu-1-P). The chain is Putative methylthioribose-1-phosphate isomerase from Pyrococcus furiosus (strain ATCC 43587 / DSM 3638 / JCM 8422 / Vc1).